The following is a 181-amino-acid chain: Large ribosomal subunit protein uL5 (181 aa).

The protein belongs to the universal ribosomal protein uL5 family. In terms of assembly, part of the 50S ribosomal subunit; part of the 5S rRNA/L5/L18/L25 subcomplex. Contacts the 5S rRNA and the P site tRNA. Forms a bridge to the 30S subunit in the 70S ribosome.

This is one of the proteins that bind and probably mediate the attachment of the 5S RNA into the large ribosomal subunit, where it forms part of the central protuberance. In the 70S ribosome it contacts protein S13 of the 30S subunit (bridge B1b), connecting the 2 subunits; this bridge is implicated in subunit movement. Contacts the P site tRNA; the 5S rRNA and some of its associated proteins might help stabilize positioning of ribosome-bound tRNAs. In Desulforamulus reducens (strain ATCC BAA-1160 / DSM 100696 / MI-1) (Desulfotomaculum reducens), this protein is Large ribosomal subunit protein uL5.